The sequence spans 106 residues: Iron-sulfur cluster assembly protein CyaY (106 aa).

Belongs to the frataxin family.

Its function is as follows. Involved in iron-sulfur (Fe-S) cluster assembly. May act as a regulator of Fe-S biogenesis. In Salmonella arizonae (strain ATCC BAA-731 / CDC346-86 / RSK2980), this protein is Iron-sulfur cluster assembly protein CyaY.